Reading from the N-terminus, the 218-residue chain is Oxygen regulatory protein NreC (218 aa).

A Response regulatory domain is found at 2–119 (KIVIADDHAV…QLILAVRTVY (118 aa)). Residue D53 is modified to 4-aspartylphosphate. In terms of domain architecture, HTH luxR-type spans 149-214 (SSDPFKILSK…ELVEYALKKK (66 aa)). The H-T-H motif DNA-binding region spans 173–192 (NKDIAEKLFVSVKTVEAHKT).

Post-translationally, phosphorylated by NreB.

It is found in the cytoplasm. Its function is as follows. Member of the two-component regulatory system NreB/NreC involved in the control of dissimilatory nitrate/nitrite reduction in response to oxygen. Phosphorylated NreC binds to a GC-rich palindromic sequence at the promoters of the nitrate (narGHJI) and nitrite (nir) reductase operons, as well as the putative nitrate transporter gene narT, and activates their expression. The polypeptide is Oxygen regulatory protein NreC (nreC) (Staphylococcus epidermidis (strain ATCC 35984 / DSM 28319 / BCRC 17069 / CCUG 31568 / BM 3577 / RP62A)).